The following is a 245-amino-acid chain: tRNA (guanine-N(1)-)-methyltransferase (245 aa).

S-adenosyl-L-methionine-binding positions include glycine 111 and 131 to 136; that span reads MGDYVL.

Belongs to the RNA methyltransferase TrmD family. Homodimer.

The protein localises to the cytoplasm. It catalyses the reaction guanosine(37) in tRNA + S-adenosyl-L-methionine = N(1)-methylguanosine(37) in tRNA + S-adenosyl-L-homocysteine + H(+). Functionally, specifically methylates guanosine-37 in various tRNAs. In Staphylococcus epidermidis (strain ATCC 35984 / DSM 28319 / BCRC 17069 / CCUG 31568 / BM 3577 / RP62A), this protein is tRNA (guanine-N(1)-)-methyltransferase.